We begin with the raw amino-acid sequence, 534 residues long: Chaperonin GroEL (534 aa).

Residues 29-32 (TAGP), 86-90 (DGTTT), Gly413, and Asp494 each bind ATP.

The protein belongs to the chaperonin (HSP60) family. As to quaternary structure, forms a cylinder of 14 subunits composed of two heptameric rings stacked back-to-back. Interacts with the co-chaperonin GroES.

The protein resides in the cytoplasm. It catalyses the reaction ATP + H2O + a folded polypeptide = ADP + phosphate + an unfolded polypeptide.. Functionally, together with its co-chaperonin GroES, plays an essential role in assisting protein folding. The GroEL-GroES system forms a nano-cage that allows encapsulation of the non-native substrate proteins and provides a physical environment optimized to promote and accelerate protein folding. This chain is Chaperonin GroEL, found in Mycoplasmoides gallisepticum (strain R(low / passage 15 / clone 2)) (Mycoplasma gallisepticum).